A 96-amino-acid polypeptide reads, in one-letter code: 5-hydroxytryptamine receptor 2B (96 aa).

At 1 to 8 the chain is on the extracellular side; that stretch reads CNQSTLQM. The N-linked (GlcNAc...) asparagine glycan is linked to Asn-2. Residues 9–30 form a helical membrane-spanning segment; sequence LLEIFVWIGYVSSGVNPLVYTL. An NPxxY motif; important for ligand-induced conformation changes and signaling motif is present at residues 24 to 28; sequence NPLVY. The Cytoplasmic segment spans residues 31–96; it reads FNKTFRDAFG…STMYQSPVRL (66 aa). Cys-45 is lipidated: S-palmitoyl cysteine.

It belongs to the G-protein coupled receptor 1 family. Interacts (via C-terminus) with MPDZ.

It localises to the cell membrane. The protein localises to the synapse. The protein resides in the synaptosome. Functionally, G-protein coupled receptor for 5-hydroxytryptamine (serotonin). Also functions as a receptor for various ergot alkaloid derivatives and psychoactive substances. Ligand binding causes a conformation change that triggers signaling via guanine nucleotide-binding proteins (G proteins) and modulates the activity of downstream effectors. HTR2B is coupled to G(q)/G(11) G alpha proteins and activates phospholipase C-beta, releasing diacylglycerol (DAG) and inositol 1,4,5-trisphosphate (IP3) second messengers that modulate the activity of phosphatidylinositol 3-kinase and promote the release of Ca(2+) ions from intracellular stores, respectively. Beta-arrestin family members inhibit signaling via G proteins and mediate activation of alternative signaling pathways. Plays a role in the regulation of dopamine and 5-hydroxytryptamine release, 5-hydroxytryptamine uptake and in the regulation of extracellular dopamine and 5-hydroxytryptamine levels, and thereby affects neural activity. May play a role in the perception of pain. Plays a role in the regulation of behavior, including impulsive behavior. Required for normal proliferation of embryonic cardiac myocytes and normal heart development. Protects cardiomyocytes against apoptosis. Plays a role in the adaptation of pulmonary arteries to chronic hypoxia. Plays a role in vasoconstriction. Required for normal osteoblast function and proliferation, and for maintaining normal bone density. Required for normal proliferation of the interstitial cells of Cajal in the intestine. The sequence is that of 5-hydroxytryptamine receptor 2B (HTR2B) from Cavia porcellus (Guinea pig).